Reading from the N-terminus, the 459-residue chain is Exodeoxyribonuclease 7 large subunit (459 aa).

This sequence belongs to the XseA family. Heterooligomer composed of large and small subunits.

It is found in the cytoplasm. The enzyme catalyses Exonucleolytic cleavage in either 5'- to 3'- or 3'- to 5'-direction to yield nucleoside 5'-phosphates.. In terms of biological role, bidirectionally degrades single-stranded DNA into large acid-insoluble oligonucleotides, which are then degraded further into small acid-soluble oligonucleotides. This Pseudomonas entomophila (strain L48) protein is Exodeoxyribonuclease 7 large subunit.